We begin with the raw amino-acid sequence, 460 residues long: Ribosomal protein uS12 methylthiotransferase RimO (460 aa).

The 117-residue stretch at 18–134 folds into the MTTase N-terminal domain; sequence MKIHITSLGC…VTSIVAEVLR (117 aa). Residues Cys27, Cys63, Cys97, Cys171, Cys175, and Cys178 each contribute to the [4Fe-4S] cluster site. A Radical SAM core domain is found at 157-387; it reads STPFHYAYVK…MVLQQEISLS (231 aa). Positions 390-456 constitute a TRAM domain; sequence QEWIGKTLEV…HYDLMGEAID (67 aa).

Belongs to the methylthiotransferase family. RimO subfamily. [4Fe-4S] cluster serves as cofactor.

The protein resides in the cytoplasm. The enzyme catalyses L-aspartate(89)-[ribosomal protein uS12]-hydrogen + (sulfur carrier)-SH + AH2 + 2 S-adenosyl-L-methionine = 3-methylsulfanyl-L-aspartate(89)-[ribosomal protein uS12]-hydrogen + (sulfur carrier)-H + 5'-deoxyadenosine + L-methionine + A + S-adenosyl-L-homocysteine + 2 H(+). Functionally, catalyzes the methylthiolation of an aspartic acid residue of ribosomal protein uS12. In Heliobacterium modesticaldum (strain ATCC 51547 / Ice1), this protein is Ribosomal protein uS12 methylthiotransferase RimO.